Here is a 197-residue protein sequence, read N- to C-terminus: dTTP/UTP pyrophosphatase (197 aa).

Catalysis depends on D70, which acts as the Proton acceptor.

Belongs to the Maf family. YhdE subfamily. A divalent metal cation serves as cofactor.

It localises to the cytoplasm. It carries out the reaction dTTP + H2O = dTMP + diphosphate + H(+). The enzyme catalyses UTP + H2O = UMP + diphosphate + H(+). In terms of biological role, nucleoside triphosphate pyrophosphatase that hydrolyzes dTTP and UTP. May have a dual role in cell division arrest and in preventing the incorporation of modified nucleotides into cellular nucleic acids. This is dTTP/UTP pyrophosphatase (yceF) from Shigella dysenteriae serotype 1 (strain Sd197).